A 182-amino-acid chain; its full sequence is Large ribosomal subunit protein bL17m (182 aa).

It belongs to the bacterial ribosomal protein bL17 family.

It localises to the mitochondrion. The protein is Large ribosomal subunit protein bL17m (mrpl17) of Dictyostelium discoideum (Social amoeba).